The sequence spans 150 residues: Ribosome-binding factor A (150 aa).

Residues 126-150 form a disordered region; that stretch reads EVARDLSHDDDEDGGADEAPRNGDE.

This sequence belongs to the RbfA family. As to quaternary structure, monomer. Binds 30S ribosomal subunits, but not 50S ribosomal subunits or 70S ribosomes.

It localises to the cytoplasm. Its function is as follows. One of several proteins that assist in the late maturation steps of the functional core of the 30S ribosomal subunit. Associates with free 30S ribosomal subunits (but not with 30S subunits that are part of 70S ribosomes or polysomes). Required for efficient processing of 16S rRNA. May interact with the 5'-terminal helix region of 16S rRNA. The sequence is that of Ribosome-binding factor A from Brucella suis (strain ATCC 23445 / NCTC 10510).